Here is a 195-residue protein sequence, read N- to C-terminus: ATP-dependent Clp protease proteolytic subunit 2 (195 aa).

The Nucleophile role is filled by Ser98. His123 is a catalytic residue.

It belongs to the peptidase S14 family. Fourteen ClpP subunits assemble into 2 heptameric rings which stack back to back to give a disk-like structure with a central cavity, resembling the structure of eukaryotic proteasomes.

The protein localises to the cytoplasm. The enzyme catalyses Hydrolysis of proteins to small peptides in the presence of ATP and magnesium. alpha-casein is the usual test substrate. In the absence of ATP, only oligopeptides shorter than five residues are hydrolyzed (such as succinyl-Leu-Tyr-|-NHMec, and Leu-Tyr-Leu-|-Tyr-Trp, in which cleavage of the -Tyr-|-Leu- and -Tyr-|-Trp bonds also occurs).. Functionally, cleaves peptides in various proteins in a process that requires ATP hydrolysis. Has a chymotrypsin-like activity. Plays a major role in the degradation of misfolded proteins. ClpXP2 is involved in the complete degradation of the Site-2 clipped anti-sigma-W factor RsiW. This results in the release of SigW and the transcription activation of the genes under the control of the sigma-W factor. The chain is ATP-dependent Clp protease proteolytic subunit 2 from Shouchella clausii (strain KSM-K16) (Alkalihalobacillus clausii).